The primary structure comprises 185 residues: Elongation factor P (185 aa).

This sequence belongs to the elongation factor P family.

The protein resides in the cytoplasm. Its pathway is protein biosynthesis; polypeptide chain elongation. Its function is as follows. Involved in peptide bond synthesis. Stimulates efficient translation and peptide-bond synthesis on native or reconstituted 70S ribosomes in vitro. Probably functions indirectly by altering the affinity of the ribosome for aminoacyl-tRNA, thus increasing their reactivity as acceptors for peptidyl transferase. This chain is Elongation factor P, found in Streptococcus pyogenes serotype M5 (strain Manfredo).